The following is a 379-amino-acid chain: MVADTKLYDCLEVRPEASEAELKKAYRKLALKYHPDKNPNGEKKFKEISLAYEVLSDPQRRKLYDQYGITEGNAAPPPPGAEGGPGAGFGGFPGAGPGGARTFHFNMGGPGGAQFFSASDPNDIFERVFGHAFAGGGGMGGGMGGMGGMDDDMDMDGGFGTRTRGGGMPGGFANMFGGGGAGPHARRSHPSFGGSRPSQPPAQNEVITRPLNVSLEDLFTGCTKKMKISRHIIDASGQSVKADRILEIKVKPGWKAGTKIKFAGEGDEKPDGTVQDIQFVLAEKPHPVFTRSGDDLRMQVELSLKEALLGFSKQISTIDGKKLKVSSSLPTQPGYEITYPGFGMPLPKNPSQRGNMIIECKVKFPTELTPAQKTAAEAF.

Residues 1 to 70 enclose the J domain; sequence MVADTKLYDC…RKLYDQYGIT (70 aa). Disordered regions lie at residues 69 to 95 and 176 to 205; these read ITEGNAAPPPPGAEGGPGAGFGGFPGA and FGGGGAGPHARRSHPSFGGSRPSQPPAQNE. Gly residues predominate over residues 81 to 95; the sequence is AEGGPGAGFGGFPGA.

Its function is as follows. Required for nuclear migration during mitosis. It is required for the normal initiation of translation. In Schizosaccharomyces pombe (strain 972 / ATCC 24843) (Fission yeast), this protein is Protein psi1 (psi1).